We begin with the raw amino-acid sequence, 206 residues long: dCTP deaminase, dUMP-forming (206 aa).

DCTP-binding positions include 117-122 (RSSFGR), aspartate 135, 143-145 (TLE), glutamine 163, tyrosine 177, lysine 184, and glutamine 188. Glutamate 145 serves as the catalytic Proton donor/acceptor.

Belongs to the dCTP deaminase family. Homotrimer.

It catalyses the reaction dCTP + 2 H2O = dUMP + NH4(+) + diphosphate. It participates in pyrimidine metabolism; dUMP biosynthesis; dUMP from dCTP: step 1/1. Functionally, bifunctional enzyme that catalyzes both the deamination of dCTP to dUTP and the hydrolysis of dUTP to dUMP without releasing the toxic dUTP intermediate. This Methanococcus maripaludis (strain C6 / ATCC BAA-1332) protein is dCTP deaminase, dUMP-forming.